Reading from the N-terminus, the 249-residue chain is 14-3-3-like protein D (249 aa).

It belongs to the 14-3-3 family.

The chain is 14-3-3-like protein D from Nicotiana tabacum (Common tobacco).